The following is a 141-amino-acid chain: Putative pre-16S rRNA nuclease (141 aa).

The protein belongs to the YqgF nuclease family.

Its subcellular location is the cytoplasm. Its function is as follows. Could be a nuclease involved in processing of the 5'-end of pre-16S rRNA. In Clostridioides difficile (strain 630) (Peptoclostridium difficile), this protein is Putative pre-16S rRNA nuclease.